The chain runs to 332 residues: 3-ketodihydrosphingosine reductase (332 aa).

An N-terminal signal peptide occupies residues 1-25 (MLLLAAAGLVAFVLLLYMVSPLISP). Residues 26–270 (KPLALPGAHV…GNFNSSIGSD (245 aa)) lie on the Cytoplasmic side of the membrane. NADPH contacts are provided by glycine 39, serine 41, serine 42, glycine 43, arginine 64, lysine 68, and aspartate 93. The short motif at 39–43 (GGSSG) is the GXSXG element. The Proton donor role is filled by serine 172. Tyrosine 186 acts as the Proton acceptor in catalysis. Positions 186 and 190 each coordinate NADP(+). Residue lysine 190 is the Lowers pKa of active site Tyr of the active site. The chain crosses the membrane as a helical span at residues 271–291 (GYMLSSLTCGMAPVTSITEGL). The Lumenal segment spans residues 292–293 (QQ). Residues 294 to 314 (VVTMGLFRTIALFYLGSFDNI) form a helical membrane-spanning segment. At 315–332 (VRRCMVQKAKPEVVDKTA) the chain is on the cytoplasmic side.

The protein belongs to the short-chain dehydrogenases/reductases (SDR) family.

It is found in the endoplasmic reticulum membrane. It carries out the reaction sphinganine + NADP(+) = 3-oxosphinganine + NADPH + H(+). It participates in lipid metabolism; sphingolipid metabolism. Its function is as follows. Catalyzes the reduction of 3'-oxosphinganine (3-ketodihydrosphingosine/KDS) to sphinganine (dihydrosphingosine/DHS), the second step of de novo sphingolipid biosynthesis. This chain is 3-ketodihydrosphingosine reductase (Kdsr), found in Mus musculus (Mouse).